Reading from the N-terminus, the 606-residue chain is Diphthine--ammonia ligase (606 aa).

In the N-terminal section; belongs to the Diphthine--ammonia ligase family. This sequence in the C-terminal section; belongs to the RutC family.

It is found in the cytoplasm. The protein resides in the nucleus. It carries out the reaction diphthine-[translation elongation factor 2] + NH4(+) + ATP = diphthamide-[translation elongation factor 2] + AMP + diphosphate + H(+). The protein operates within protein modification; peptidyl-diphthamide biosynthesis. Its function is as follows. Amidase that catalyzes the last step of diphthamide biosynthesis using ammonium and ATP. Diphthamide biosynthesis consists in the conversion of an L-histidine residue in the translation elongation factor eEF-2 (eft201 or eft202) to diphthamide. Has a role in meiosis. This chain is Diphthine--ammonia ligase (mug71), found in Schizosaccharomyces pombe (strain 972 / ATCC 24843) (Fission yeast).